The sequence spans 214 residues: Probable nicotinate-nucleotide adenylyltransferase (214 aa).

Belongs to the NadD family.

The catalysed reaction is nicotinate beta-D-ribonucleotide + ATP + H(+) = deamido-NAD(+) + diphosphate. Its pathway is cofactor biosynthesis; NAD(+) biosynthesis; deamido-NAD(+) from nicotinate D-ribonucleotide: step 1/1. Catalyzes the reversible adenylation of nicotinate mononucleotide (NaMN) to nicotinic acid adenine dinucleotide (NaAD). This is Probable nicotinate-nucleotide adenylyltransferase from Mycolicibacterium vanbaalenii (strain DSM 7251 / JCM 13017 / BCRC 16820 / KCTC 9966 / NRRL B-24157 / PYR-1) (Mycobacterium vanbaalenii).